We begin with the raw amino-acid sequence, 296 residues long: Probable endonuclease 4 (296 aa).

9 residues coordinate Zn(2+): His-68, His-109, Glu-144, Asp-178, His-181, His-213, Asp-226, His-228, and Glu-258.

This sequence belongs to the AP endonuclease 2 family. Zn(2+) is required as a cofactor.

It catalyses the reaction Endonucleolytic cleavage to 5'-phosphooligonucleotide end-products.. Endonuclease IV plays a role in DNA repair. It cleaves phosphodiester bonds at apurinic or apyrimidinic (AP) sites, generating a 3'-hydroxyl group and a 5'-terminal sugar phosphate. The chain is Probable endonuclease 4 from Staphylococcus epidermidis (strain ATCC 35984 / DSM 28319 / BCRC 17069 / CCUG 31568 / BM 3577 / RP62A).